The chain runs to 357 residues: Cobalt-precorrin-5B C(1)-methyltransferase (357 aa).

The protein belongs to the CbiD family.

It catalyses the reaction Co-precorrin-5B + S-adenosyl-L-methionine = Co-precorrin-6A + S-adenosyl-L-homocysteine. It functions in the pathway cofactor biosynthesis; adenosylcobalamin biosynthesis; cob(II)yrinate a,c-diamide from sirohydrochlorin (anaerobic route): step 6/10. Catalyzes the methylation of C-1 in cobalt-precorrin-5B to form cobalt-precorrin-6A. The polypeptide is Cobalt-precorrin-5B C(1)-methyltransferase (Gloeobacter violaceus (strain ATCC 29082 / PCC 7421)).